A 227-amino-acid polypeptide reads, in one-letter code: Testis-expressed protein 30 (227 aa).

The polypeptide is Testis-expressed protein 30 (TEX30) (Homo sapiens (Human)).